We begin with the raw amino-acid sequence, 122 residues long: Probable DNA-directed RNA polymerase II subunit RPB11 (122 aa).

Belongs to the archaeal Rpo11/eukaryotic RPB11/RPC19 RNA polymerase subunit family. Component of the RNA polymerase II (Pol II) complex consisting of 12 subunits.

Its subcellular location is the nucleus. In terms of biological role, DNA-dependent RNA polymerase catalyzes the transcription of DNA into RNA using the four ribonucleoside triphosphates as substrates. Component of RNA polymerase II which synthesizes mRNA precursors and many functional non-coding RNAs. Pol II is the central component of the basal RNA polymerase II transcription machinery. It is composed of mobile elements that move relative to each other. RPB11 is part of the core element with the central large cleft. The protein is Probable DNA-directed RNA polymerase II subunit RPB11 (rpb-11) of Caenorhabditis elegans.